The following is a 147-amino-acid chain: 3-dehydroquinate dehydratase (147 aa).

Catalysis depends on Tyr23, which acts as the Proton acceptor. Residues Asn74, His80, and Asp87 each coordinate substrate. His100 acts as the Proton donor in catalysis. Residues 101–102 (LS) and Arg111 contribute to the substrate site.

It belongs to the type-II 3-dehydroquinase family. In terms of assembly, homododecamer.

The catalysed reaction is 3-dehydroquinate = 3-dehydroshikimate + H2O. It functions in the pathway metabolic intermediate biosynthesis; chorismate biosynthesis; chorismate from D-erythrose 4-phosphate and phosphoenolpyruvate: step 3/7. In terms of biological role, catalyzes a trans-dehydration via an enolate intermediate. The sequence is that of 3-dehydroquinate dehydratase from Glaesserella parasuis serovar 5 (strain SH0165) (Haemophilus parasuis).